The following is a 123-amino-acid chain: Small ribosomal subunit protein uS12 (123 aa).

The residue at position 89 (aspartate 89) is a 3-methylthioaspartic acid.

This sequence belongs to the universal ribosomal protein uS12 family. As to quaternary structure, part of the 30S ribosomal subunit. Contacts proteins S8 and S17. May interact with IF1 in the 30S initiation complex.

With S4 and S5 plays an important role in translational accuracy. In terms of biological role, interacts with and stabilizes bases of the 16S rRNA that are involved in tRNA selection in the A site and with the mRNA backbone. Located at the interface of the 30S and 50S subunits, it traverses the body of the 30S subunit contacting proteins on the other side and probably holding the rRNA structure together. The combined cluster of proteins S8, S12 and S17 appears to hold together the shoulder and platform of the 30S subunit. In Mesorhizobium japonicum (strain LMG 29417 / CECT 9101 / MAFF 303099) (Mesorhizobium loti (strain MAFF 303099)), this protein is Small ribosomal subunit protein uS12.